The primary structure comprises 546 residues: Chaperonin GroEL (546 aa).

Residues 29-32 (TLGP), lysine 50, 86-90 (DGTTT), glycine 415, and aspartate 495 each bind ATP. The segment at 526-546 (EDNAGGGGMPQGMGGGMPGMM) is disordered. Residues 529–546 (AGGGGMPQGMGGGMPGMM) are compositionally biased toward gly residues.

This sequence belongs to the chaperonin (HSP60) family. In terms of assembly, forms a cylinder of 14 subunits composed of two heptameric rings stacked back-to-back. Interacts with the co-chaperonin GroES.

The protein resides in the cytoplasm. It catalyses the reaction ATP + H2O + a folded polypeptide = ADP + phosphate + an unfolded polypeptide.. In terms of biological role, together with its co-chaperonin GroES, plays an essential role in assisting protein folding. The GroEL-GroES system forms a nano-cage that allows encapsulation of the non-native substrate proteins and provides a physical environment optimized to promote and accelerate protein folding. The sequence is that of Chaperonin GroEL from Christiangramia forsetii (strain DSM 17595 / CGMCC 1.15422 / KT0803) (Gramella forsetii).